We begin with the raw amino-acid sequence, 810 residues long: Probable inorganic carbon transporter subunit DabA (810 aa).

Zn(2+)-binding residues include cysteine 347, aspartate 349, histidine 509, and cysteine 524.

This sequence belongs to the inorganic carbon transporter (TC 9.A.2) DabA family. In terms of assembly, forms a complex with DabB. Requires Zn(2+) as cofactor.

It localises to the cell inner membrane. Functionally, part of an energy-coupled inorganic carbon pump. This chain is Probable inorganic carbon transporter subunit DabA, found in Marinomonas sp. (strain MWYL1).